Consider the following 219-residue polypeptide: 3,4-dihydroxy-2-butanone 4-phosphate synthase (219 aa).

Residues 37 to 38 (RE), aspartate 42, 150 to 154 (RRGHT), and glutamate 174 each bind D-ribulose 5-phosphate. Glutamate 38 provides a ligand contact to Mg(2+). Histidine 153 contributes to the Mg(2+) binding site.

It belongs to the DHBP synthase family. Homodimer. The cofactor is Mg(2+). It depends on Mn(2+) as a cofactor.

The catalysed reaction is D-ribulose 5-phosphate = (2S)-2-hydroxy-3-oxobutyl phosphate + formate + H(+). It participates in cofactor biosynthesis; riboflavin biosynthesis; 2-hydroxy-3-oxobutyl phosphate from D-ribulose 5-phosphate: step 1/1. In terms of biological role, catalyzes the conversion of D-ribulose 5-phosphate to formate and 3,4-dihydroxy-2-butanone 4-phosphate. The polypeptide is 3,4-dihydroxy-2-butanone 4-phosphate synthase (Edwardsiella ictaluri (strain 93-146)).